A 556-amino-acid chain; its full sequence is Portal protein (556 aa).

Positions 527–556 (AQGAKTLSETQTSDPSALTAIANAAGAPQQ) are disordered. Over residues 533–542 (LSETQTSDPS) the composition is skewed to polar residues.

It belongs to the podoviridae head-to-tail connector protein family. In terms of assembly, homododecamer.

The protein resides in the virion. Its function is as follows. Forms the portal vertex of the capsid. This portal plays critical roles in head assembly, genome packaging, neck/tail attachment, and genome ejection. The portal protein multimerizes as a single ring-shaped homododecamer arranged around a central channel. The chain is Portal protein from Salmonella phage epsilon15.